We begin with the raw amino-acid sequence, 222 residues long: Nucleoside triphosphate pyrophosphatase (222 aa).

D82 acts as the Proton acceptor in catalysis.

The protein belongs to the Maf family. Requires a divalent metal cation as cofactor.

It localises to the cytoplasm. The enzyme catalyses a ribonucleoside 5'-triphosphate + H2O = a ribonucleoside 5'-phosphate + diphosphate + H(+). It carries out the reaction a 2'-deoxyribonucleoside 5'-triphosphate + H2O = a 2'-deoxyribonucleoside 5'-phosphate + diphosphate + H(+). Nucleoside triphosphate pyrophosphatase. May have a dual role in cell division arrest and in preventing the incorporation of modified nucleotides into cellular nucleic acids. This is Nucleoside triphosphate pyrophosphatase from Mycobacterium tuberculosis (strain ATCC 25177 / H37Ra).